Here is a 39-residue protein sequence, read N- to C-terminus: Photosystem II reaction center protein L (39 aa).

A helical transmembrane segment spans residues 18-38 (SLYLGLLFVFVTGVLMSSYFF).

Belongs to the PsbL family. PSII is composed of 1 copy each of membrane proteins PsbA, PsbB, PsbC, PsbD, PsbE, PsbF, PsbH, PsbI, PsbJ, PsbK, PsbL, PsbM, PsbT, PsbX, PsbY, PsbZ, Psb30/Ycf12, peripheral proteins PsbO, CyanoQ (PsbQ), PsbU, PsbV and a large number of cofactors. It forms dimeric complexes.

The protein resides in the cellular thylakoid membrane. In terms of biological role, one of the components of the core complex of photosystem II (PSII). PSII is a light-driven water:plastoquinone oxidoreductase that uses light energy to abstract electrons from H(2)O, generating O(2) and a proton gradient subsequently used for ATP formation. It consists of a core antenna complex that captures photons, and an electron transfer chain that converts photonic excitation into a charge separation. This subunit is found at the monomer-monomer interface and is required for correct PSII assembly and/or dimerization. The chain is Photosystem II reaction center protein L from Synechococcus sp. (strain CC9902).